The primary structure comprises 1279 residues: Sterol regulatory element-binding protein cleavage-activating protein (1279 aa).

Topologically, residues 1-18 are cytoplasmic; the sequence is MTLTERLREKISRAFYNH. A helical transmembrane segment spans residues 19-39; the sequence is GLLCASYPIPIILFTGFCILA. The Lumenal segment spans residues 40-279; sequence CCYPLLKLPL…SLVHVHFKEE (240 aa). The tract at residues 46–284 is loop-1; it reads KLPLPGTGPV…HFKEEIGVAE (239 aa). A disordered region spans residues 60–80; that stretch reads PVKDYSPPPVDSDRKQGEPTE. The N-linked (GlcNAc...) asparagine glycan is linked to Asn-263. The helical transmembrane segment at 280-300 threads the bilayer; the sequence is IGVAELIPLVTTYIILFAYIY. An SSD domain is found at 284-442; it reads ELIPLVTTYI…MLFFTTVLSI (159 aa). Residues 301-312 lie on the Cytoplasmic side of the membrane; sequence FSTRKIDMVKSK. Residues 313-333 traverse the membrane as a helical segment; the sequence is WGLALAAVVTVLSSLLMSVGL. The Lumenal segment spans residues 334–344; sequence CTLFGLTPTLN. The chain crosses the membrane as a helical span at residues 345–365; it reads GGEIFPYLVVVIGLENVLVLT. Residues 366–401 lie on the Cytoplasmic side of the membrane; it reads KSVVSTPVDLEVKLRIAQGLSSESWSIMKNMATELG. Residues 402 to 422 form a helical membrane-spanning segment; that stretch reads IILIGYFTLVPAIQEFCLFAV. Position 423 (Val-423) is a topological domain, lumenal. A helical membrane pass occupies residues 424–444; it reads GLVSDFFLQMLFFTTVLSIDI. Topologically, residues 445 to 518 are cytoplasmic; the sequence is RRMELADLNK…FLARTRLAQR (74 aa). Positions 447 to 452 match the ER export signal motif; the sequence is MELADL. Glycyl lysine isopeptide (Lys-Gly) (interchain with G-Cter in ubiquitin) cross-links involve residues Lys-454 and Lys-466. Residues 519–539 form a helical membrane-spanning segment; the sequence is LIMAGTVVWIGILVYTDPAGL. The interval 535–710 is loop-7; sequence DPAGLRNYLA…QAHGDVTLYK (176 aa). Residues 540 to 709 lie on the Lumenal side of the membrane; the sequence is RNYLAAQVTE…VQAHGDVTLY (170 aa). A disordered region spans residues 579–615; sequence IFPPDAPKLPENQTSPGESPERGGPAEVVHDSPVPEV. N-linked (GlcNAc...) asparagine glycans are attached at residues Asn-590 and Asn-641. Residues 668–696 form a disordered region; it reads EGRHPQDGRSAWPPPGPIPAGHWEAGPKG. A helical membrane pass occupies residues 710 to 730; sequence KVAALGLATGIVLVLLLLCLY. The Cytoplasmic portion of the chain corresponds to 731–1279; the sequence is RVLCPRNYGQ…YVPSVLEKLD (549 aa). An interaction with SREBF2 region spans residues 731–1279; the sequence is RVLCPRNYGQ…YVPSVLEKLD (549 aa). A WD 1 repeat occupies 771–811; sequence VLRGHLMDIECLASDGMLLVSCCLAGHVCVWDAQTGDCLTR. Positions 811–904 are disordered; it reads RIPRPGRQRR…PRHRAVCGRS (94 aa). Phosphoserine is present on residues Ser-822, Ser-838, and Ser-851. Positions 877–891 are enriched in polar residues; that stretch reads IDTNFSAQPRSSQPT. A phosphoserine mark is found at Ser-907 and Ser-937. A disordered region spans residues 931 to 962; sequence PALRPPSPGPVLSQAPEDEGGSPEKGSPSLAW. WD repeat units lie at residues 952-1002 and 1005-1042; these read SPEK…LCCS and EVSSGITALVFLDKRIVAARLNGSLDFFSLETHTALSP. Arg-1051 bears the Omega-N-methylarginine mark. WD repeat units follow at residues 1077–1114, 1117–1155, 1158–1195, and 1197–1235; these read AHQKPITALKAAAGRLVTGSQDHTLRVFRLEDSCCLFT, GHSGAITTVYIDQTMVLASGGQDGAICLWDVLTGSRVSH, AHRGDVTSLTCTTSCVISSGLDDLISIWDRSTGIKFYS, and QQDLGCGASLGVISDNLLVTGGQGCVSFWDLNYGDLLQT.

The protein belongs to the WD repeat SCAP family. In terms of assembly, membrane region forms a homotetramer. Component of the SCAP-SREBP complex (composed of SCAP and SREBF1/SREBP1 or SREBF2/SREBP2); interacts with SREBF1/SREBP1 or SREBF2/SREBP2 through its C-terminal cytoplasmic domain. Forms a ternary complex with INSIG1 or INSIG2 through its transmembrane domains at high sterol concentrations. Interacts with PAQR3; the interaction anchors the SCAP-SREBP complex to the Golgi apparatus in low cholesterol conditions. Interacts with the SEC23-SEC24 complex in a SAR1-GTP-dependent manner through an ER export signal in its third cytoplasmic loop. Interacts with RNF139; the interaction inhibits the interaction of SCAP with SEC24B and hampering the ER to Golgi transport of the SCAP-SREBP complex. Interacts with SPRING1. Ubiquitinated at Lys-454 and Lys-466. RNF145 triggers ubiquitination of SCAP, likely inhibiting SCAP-SREBP complex transport to the Golgi apparatus and the subsequent processing/maturation of SREBF2/SREBP2.

Its subcellular location is the endoplasmic reticulum membrane. The protein resides in the golgi apparatus membrane. It localises to the cytoplasmic vesicle. It is found in the COPII-coated vesicle membrane. Escort protein required for cholesterol as well as lipid homeostasis. Regulates export of the SCAP-SREBP complex from the endoplasmic reticulum to the Golgi upon low cholesterol, thereby regulating the processing of sterol regulatory element-binding proteins (SREBPs) SREBF1/SREBP1 and SREBF2/SREBP2. At high sterol concentrations, formation of a ternary complex with INSIG (INSIG1 or INSIG2) leads to mask the ER export signal in SCAP, promoting retention of the complex in the endoplasmic reticulum. Low sterol concentrations trigger release of INSIG, a conformational change in the SSD domain of SCAP, unmasking of the ER export signal, promoting recruitment into COPII-coated vesicles and transport of the SCAP-SREBP to the Golgi: in the Golgi, SREBPs are then processed, releasing the transcription factor fragment of SREBPs from the membrane, its import into the nucleus and up-regulation of LDLR, INSIG1 and the mevalonate pathway. Binds cholesterol via its SSD domain. The sequence is that of Sterol regulatory element-binding protein cleavage-activating protein from Homo sapiens (Human).